Consider the following 846-residue polypeptide: Protein kintoun (846 aa).

Disordered stretches follow at residues 1-21 (MSTAAGSRKKHSKLHNEERAD), 372-416 (YLSR…PALT), 581-657 (HTSI…DSTI), and 743-846 (HDSS…DDEI). S378 carries the phosphoserine modification. The segment covering 389–403 (PVEDDADGDMPETPE) has biased composition (acidic residues). Composition is skewed to basic residues over residues 596-612 (LHKKPSKKQRKRNKKQR) and 750-766 (QRKKNQKRRNCKLRAQQ). S770 carries the phosphoserine modification. The span at 821–832 (TRQDHADADAKN) shows a compositional bias: basic and acidic residues.

It belongs to the PIH1 family. Kintoun subfamily. Interacts with Pp1alpha-96A, Pp1-87B, Pp1-13C and flw.

It localises to the cytoplasm. In terms of biological role, required for cytoplasmic pre-assembly of axonemal dyneins, thereby playing a central role in motility in cilia and flagella. Involved in pre-assembly of dynein arm complexes in the cytoplasm before intraflagellar transport loads them for the ciliary compartment. This Drosophila persimilis (Fruit fly) protein is Protein kintoun.